Consider the following 650-residue polypeptide: MKGLNKITCCLLAALLMPCAGHAENEQYGANFNNADIRQFVEIVGQHLGKTILIDPSVQGTISVRSNDTFSQQEYYQFFLSILDLYGYSVITLDNGFLKVVRSANVKTSPGMIADSSRPGVGDELVTRIVPLENVPARDLAPLLRQMMDAGSVGNVVHYEPSNVLILTGRASTINKLIEVIKRVDVIGTEKQQIIHLEYASAEDLAEILNQLISESHGKSQMPALLSAKIVADKRTNSLIISGPEKARQRITSLLKSLDVEESEEGNTRVYYLKYAKATNLVEVLTGVSEKLKDEKGNARKPSSSGAMDNVAITADEQTNSLVITADQSVQEKLATVIARLDIRRAQVLVEAIIVEVQDGNGLNLGVQWANKNVGAQQFTNTGLPIFNAAQGVADYKKNGGITSANPAWDMFSAYNGMAAGFFNGDWGVLLTALASNNKNDILATPSIVTLDNKLASFNVGQDVPVLSGSQTTSGDNVFNTVERKTVGTKLKVTPQVNEGDAVLLEIEQEVSSVDSSSNSTLGPTFNTRTIQNAVLVKTGETVVLGGLLDDFSKEQVSKVPLLGDIPLVGQLFRYTSTERAKRNLMVFIRPTIIRDDDVYRSLSKEKYTRYRQEQQQRIDGKSKALVGSEDLPVLDENTFNSHAPAPSSR.

Positions 1–23 (MKGLNKITCCLLAALLMPCAGHA) are cleaved as a signal peptide. Residues 24–122 (ENEQYGANFN…IADSSRPGVG (99 aa)) are N0. The segment at 124 to 188 (ELVTRIVPLE…EVIKRVDVIG (65 aa)) is N1. The segment at 189 to 263 (TEKQQIIHLE…LLKSLDVEES (75 aa)) is N2. The N3 stretch occupies residues 266 to 342 (GNTRVYYLKY…KLATVIARLD (77 aa)). Positions 345 to 596 (RAQVLVEAII…VFIRPTIIRD (252 aa)) are secretin. Residues 598–650 (DVYRSLSKEKYTRYRQEQQQRIDGKSKALVGSEDLPVLDENTFNSHAPAPSSR) are s domain.

It belongs to the bacterial secretin family. GSP D subfamily. Forms a cylindrical channel with 15 subunits; approximately 25% of the particles have 16-subunit channels. Closed pentadeacameric channels are 180 Angstroms long and 145 Angstroms in diameter. Each subunit turns in a clock-wise manner around the channel.

It is found in the cell outer membrane. In terms of biological role, involved in a type II secretion system (T2SS, formerly general secretion pathway, GSP) for the export of folded proteins across the outer membrane. This subunit would form the outer membrane channel. This is Putative secretin GspD (gspD) from Escherichia coli (strain K12).